Here is a 714-residue protein sequence, read N- to C-terminus: Epithelial splicing regulatory protein 1 (714 aa).

RRM domains are found at residues 225–302 (TVIR…KATG), 326–406 (IIVR…KSTA), and 450–530 (DCVR…ACSA).

This sequence belongs to the ESRP family.

Its subcellular location is the nucleus. Its function is as follows. mRNA splicing factor that regulates the formation of epithelial cell-specific isoforms. Specifically regulates the expression of FGFR2-IIIb, an epithelial cell-specific isoform of fgfr2. Acts by directly binding specific sequences in mRNAs. Binds the GU-rich sequence motifs in the ISE/ISS-3, a cis-element regulatory region present in the mRNA of fgfr2. The sequence is that of Epithelial splicing regulatory protein 1 (esrp1) from Danio rerio (Zebrafish).